Consider the following 38-residue polypeptide: Anthranilate phosphoribosyltransferase (38 aa).

It belongs to the anthranilate phosphoribosyltransferase family. As to quaternary structure, homodimer.

The catalysed reaction is N-(5-phospho-beta-D-ribosyl)anthranilate + diphosphate = 5-phospho-alpha-D-ribose 1-diphosphate + anthranilate. It functions in the pathway amino-acid biosynthesis; L-tryptophan biosynthesis; L-tryptophan from chorismate: step 2/5. Its function is as follows. Catalyzes the transfer of the phosphoribosyl group of 5-phosphorylribose-1-pyrophosphate (PRPP) to anthranilate to yield N-(5'-phosphoribosyl)-anthranilate (PRA). This chain is Anthranilate phosphoribosyltransferase (trpD), found in Serratia marcescens.